Reading from the N-terminus, the 450-residue chain is Mitochondrial distribution and morphology protein 10 (450 aa).

The protein belongs to the MDM10 family. Component of the ER-mitochondria encounter structure (ERMES) or MDM complex, composed of MMM1, MDM10, MDM12 and MDM34. Associates with the mitochondrial outer membrane sorting assembly machinery SAM(core) complex.

The protein localises to the mitochondrion outer membrane. Component of the ERMES/MDM complex, which serves as a molecular tether to connect the endoplasmic reticulum and mitochondria. Components of this complex are involved in the control of mitochondrial shape and protein biogenesis and may function in phospholipid exchange. MDM10 is involved in the late assembly steps of the general translocase of the mitochondrial outer membrane (TOM complex). Functions in the TOM40-specific route of the assembly of outer membrane beta-barrel proteins, including the association of TOM40 with the receptor TOM22 and small TOM proteins. Can associate with the SAM(core) complex as well as the MDM12-MMM1 complex, both involved in late steps of the major beta-barrel assembly pathway, that is responsible for biogenesis of all outer membrane beta-barrel proteins. May act as a switch that shuttles between both complexes and channels precursor proteins into the TOM40-specific pathway. Plays a role in mitochondrial morphology and in the inheritance of mitochondria. The protein is Mitochondrial distribution and morphology protein 10 of Paracoccidioides lutzii (strain ATCC MYA-826 / Pb01) (Paracoccidioides brasiliensis).